Here is a 290-residue protein sequence, read N- to C-terminus: Endonuclease 2 (290 aa).

An N-terminal signal peptide occupies residues 1–27 (MANQKGLHVVMMIITVWLLYAAPNIHG). A divalent metal cation contacts are provided by tryptophan 28 and histidine 33. A substrate-binding site is contributed by 28–33 (WGKEGH). Cysteines 37 and 68 form a disulfide. Aspartate 72 and histidine 85 together coordinate a divalent metal cation. Residues 72–76 (DRVKF), 85–88 (HYIN), and 94–99 (SYQYNR) each bind substrate. Intrachain disulfides connect cysteine 93/cysteine 245, cysteine 101/cysteine 111, and cysteine 226/cysteine 232. Substrate-binding residues include asparagine 118 and tyrosine 136. Asparagine 118 is a glycosylation site (N-linked (GlcNAc...) asparagine). Asparagine 137 carries an N-linked (GlcNAc...) asparagine glycan. Positions 147, 151, 157, 181, and 185 each coordinate a divalent metal cation. Residues 147 to 196 (HFMGDIHQPLHVSYASDKGGNTIEVHWYTRKANLHHIWDSNIIETAEADL) form a substrate binding region. N-linked (GlcNAc...) asparagine glycosylation is present at asparagine 211. The propeptide at 283 to 290 (ATLNRIFG) is removed in mature form.

This sequence belongs to the nuclease type I family. Monomer. Mn(2+) is required as a cofactor. Ca(2+) serves as cofactor. It depends on Zn(2+) as a cofactor. In terms of processing, N-glycosylation is required for enzymatic stability and activity.

The catalysed reaction is Endonucleolytic cleavage to 5'-phosphomononucleotide and 5'-phosphooligonucleotide end-products.. With respect to regulation, ssDNase activity is inhibited by the divalent cation chelator EDTA and the reducing agent DTT. Divalent metal ions (e.g. Ca(2+), Mg(2+) and Zn(2+)) and DTT represses RNase activity. RNase activity is enhanced by EDTA. Also repressed by vanadate (VO(4)(3-)) and phosphate (PO(4)(3-)) by occupying the active site. Endonuclease mostly active on RNA and ssDNA, and to a lower extent, on dsDNA. Can cleave mismatch regions in heteroduplex DNA containing single base pair mismatches or insertion/deletion bases. In contradiction with PubMed:22506810, cannot hydrolyze single-stranded DNA and does not cleave mismatches. The sequence is that of Endonuclease 2 from Arabidopsis thaliana (Mouse-ear cress).